Here is a 365-residue protein sequence, read N- to C-terminus: Chloroplast protein FOR GROWTH AND FERTILITY 1 (365 aa).

Disordered stretches follow at residues 1–30 and 62–90; these read MERL…LPRL and YTPI…PGFL. A chloroplast-targeting transit peptide spans 1 to 79; sequence MERLLQPSSS…TNNSFNGSPK (79 aa). Composition is skewed to low complexity over residues 7-24 and 62-77; these read PSSS…SRTS and YTPI…FNGS. A run of 7 helical transmembrane segments spans residues 109–129, 139–159, 182–202, 218–238, 274–294, 301–321, and 345–365; these read VILI…PPAF, GWLT…LSGP, ALWG…FLLL, IVGL…SEIP, GVVH…LALP, AFLI…TAFI, and LVAI…FSLY.

In terms of tissue distribution, mostly expressed in leaves and flowers, to a lower extent, in stems, roots, floral bud, inflorescence and siliques, and, barely, in seedlings.

The protein resides in the plastid. It localises to the chloroplast membrane. The protein localises to the plastid membrane. Functionally, together with CGF2, essential protein which supports female gametogenesis and embryogenesis, probably by securing local energy supply. The polypeptide is Chloroplast protein FOR GROWTH AND FERTILITY 1 (Arabidopsis thaliana (Mouse-ear cress)).